The chain runs to 346 residues: Methylthioribose-1-phosphate isomerase (346 aa).

Residues 45 to 47, arginine 87, and glutamine 194 each bind substrate; that span reads RGA. Residue aspartate 235 is the Proton donor of the active site. 245 to 246 provides a ligand contact to substrate; sequence NK.

The protein belongs to the eIF-2B alpha/beta/delta subunits family. MtnA subfamily.

It carries out the reaction 5-(methylsulfanyl)-alpha-D-ribose 1-phosphate = 5-(methylsulfanyl)-D-ribulose 1-phosphate. The protein operates within amino-acid biosynthesis; L-methionine biosynthesis via salvage pathway; L-methionine from S-methyl-5-thio-alpha-D-ribose 1-phosphate: step 1/6. In terms of biological role, catalyzes the interconversion of methylthioribose-1-phosphate (MTR-1-P) into methylthioribulose-1-phosphate (MTRu-1-P). The protein is Methylthioribose-1-phosphate isomerase of Syntrophomonas wolfei subsp. wolfei (strain DSM 2245B / Goettingen).